The sequence spans 531 residues: Bifunctional protein TrpGD (531 aa).

The 194-residue stretch at 3–196 (DILLLDNIDS…LAWAQQKLEP (194 aa)) folds into the Glutamine amidotransferase type-1 domain. Residue 57 to 59 (GPG) participates in L-glutamine binding. Residue Cys-84 is the Nucleophile; for GATase activity of the active site. L-glutamine contacts are provided by residues Gln-88 and 134 to 135 (SL). Active-site for GATase activity residues include His-170 and Glu-172. Residues 202-531 (PILEKLYQAQ…DRVTALAARG (330 aa)) form an anthranilate phosphoribosyltransferase region.

In the C-terminal section; belongs to the anthranilate phosphoribosyltransferase family. In terms of assembly, monomer. Heterotetramer consisting of two non-identical subunits: a beta subunit (TrpG) and a large alpha subunit (TrpE).

It carries out the reaction chorismate + L-glutamine = anthranilate + pyruvate + L-glutamate + H(+). It catalyses the reaction N-(5-phospho-beta-D-ribosyl)anthranilate + diphosphate = 5-phospho-alpha-D-ribose 1-diphosphate + anthranilate. Its pathway is amino-acid biosynthesis; L-tryptophan biosynthesis; L-tryptophan from chorismate: step 1/5. It functions in the pathway amino-acid biosynthesis; L-tryptophan biosynthesis; L-tryptophan from chorismate: step 2/5. Cooperatively feedback inhibited by tryptophan. Functionally, part of a heterotetrameric complex that catalyzes the two-step biosynthesis of anthranilate, an intermediate in the biosynthesis of L-tryptophan. In the first step, the glutamine-binding beta subunit (TrpG) of anthranilate synthase (AS) provides the glutamine amidotransferase activity which generates ammonia as a substrate that, along with chorismate, is used in the second step, catalyzed by the large alpha subunit of AS (TrpE) to produce anthranilate. In the absence of TrpG, TrpE can synthesize anthranilate directly from chorismate and high concentrations of ammonia. In addition to synthesizing anthranilate, it also catalyzes the second step of the pathway, the transfer of the phosphoribosyl group of 5-phosphorylribose-1-pyrophosphate (PRPP) to anthranilate. The polypeptide is Bifunctional protein TrpGD (trpGD) (Salmonella typhimurium (strain LT2 / SGSC1412 / ATCC 700720)).